Here is a 336-residue protein sequence, read N- to C-terminus: Ornithine carbamoyltransferase, catabolic (336 aa).

Residues 57 to 60 (STRT), Gln84, Arg108, and 135 to 138 (HPTQ) each bind carbamoyl phosphate. L-ornithine contacts are provided by residues Asn168, Asp232, and 236-237 (SM). Carbamoyl phosphate-binding positions include 274–275 (CL) and Arg321.

Belongs to the aspartate/ornithine carbamoyltransferase superfamily. OTCase family. In terms of assembly, nonameric or dodecamer (tetramer of trimers).

It localises to the cytoplasm. The catalysed reaction is carbamoyl phosphate + L-ornithine = L-citrulline + phosphate + H(+). Its pathway is amino-acid degradation; L-arginine degradation via ADI pathway; carbamoyl phosphate from L-arginine: step 2/2. Inhibited by 2-aminopentanoic acid (norvaline). Activated by phosphate and nucleoside monophosphates such as AMP, GMP, CMP, UMP. Allosterically inhibited by the polyamines such as spermidine and putrescine. Its function is as follows. Involved in the catabolism of arginine. Catalyzes the phosphorolysis of citrulline, the reverse reaction of the biosynthetic one, yielding ornithine and carbamoyl phosphate which serve to generate ATP from ADP. This catabolic OTCase does not carry out the biosynthetic reaction because of a poor affinity and a marked cooperativity for carbamoyl phosphate. The polypeptide is Ornithine carbamoyltransferase, catabolic (Pseudomonas aeruginosa (strain ATCC 15692 / DSM 22644 / CIP 104116 / JCM 14847 / LMG 12228 / 1C / PRS 101 / PAO1)).